Consider the following 869-residue polypeptide: Speckle targeted PIP5K1A-regulated poly(A) polymerase (869 aa).

The Matrin-type zinc-finger motif lies at 16–46; it reads FRCCLCDVTTANRPSLDAHLKGRKHRDLVQL. Positions 56–128 constitute an RRM domain; it reads RSVFVSGFPR…HGLRVRPREQ (73 aa). Residues 114–144 are disordered; that stretch reads HSLGGHGLRVRPREQKEFQSPASKSPKGVDS. S205 contributes to the ATP binding site. Mg(2+) is bound by residues D216 and D218. Positions 216 and 218 each coordinate UTP. 2 disordered regions span residues 226–247 and 259–335; these read MEETEPDPKAPKVPETSSLDSA and CTPA…ASKD. 2 stretches are compositionally biased toward polar residues: residues 266–276 and 283–299; these read DSLSPTSVQES and TPSSLAPQTPDSALGSD. Residues 314 to 335 show a composition bias toward basic and acidic residues; sequence QEDRKEGKQGKELELAEEASKD. Position 395 (N395) interacts with ATP. 4 residues coordinate UTP: N395, R417, Y435, and H552. The 59-residue stretch at 494–552 folds into the PAP-associated domain; the sequence is LSSLLAQFFSCVSCLDLSGSLLSLREGRPLMVAEGLPSDLWEGLRLGPMNLQDPFDLSH. The tract at residues 601–869 is KA1; binds the bulging loops of U6 snRNA but is dispensable for terminal uridylyltransferase activity; the sequence is SSPSSLLSAK…IPQALKNLLK (269 aa). Disordered regions lie at residues 640-689, 735-757, 775-796, and 803-822; these read QGTK…DHSE, MKPEVAGEGSQGETGKEASHPSS, ARRRLQQQTKEEGRGGPTTGAE, and RVTQELKGPNSEQERPPGEP. Basic and acidic residues predominate over residues 671-689; that stretch reads KSFEEGKEEPQGCAGDHSE. Phosphoserine occurs at positions 688 and 744.

It belongs to the DNA polymerase type-B-like family. In terms of assembly, associates with the cleavage and polyadenylation specificity factor (CPSF) complex. Interacts with CPSF1 and CPSF3; the interaction is direct. Interacts with PIP5K1A. Mg(2+) serves as cofactor. The cofactor is Mn(2+). Post-translationally, phosphorylated by CK1 in the proline-rich (Pro-rich) region.

It localises to the nucleus. The protein resides in the nucleolus. Its subcellular location is the nucleus speckle. It catalyses the reaction RNA(n) + UTP = RNA(n)-3'-uridine ribonucleotide + diphosphate. The catalysed reaction is RNA(n) + ATP = RNA(n)-3'-adenine ribonucleotide + diphosphate. Its activity is regulated as follows. Adenylyltransferase activity is specifically phosphatidylinositol 4,5-bisphosphate (PtdIns(4,5)P2). In terms of biological role, poly(A) polymerase that creates the 3'-poly(A) tail of specific pre-mRNAs. Localizes to nuclear speckles together with PIP5K1A and mediates polyadenylation of a select set of mRNAs, such as HMOX1. In addition to polyadenylation, it is also required for the 3'-end cleavage of pre-mRNAs: binds to the 3'UTR of targeted pre-mRNAs and promotes the recruitment and assembly of the CPSF complex on the 3'UTR of pre-mRNAs. In addition to adenylyltransferase activity, also has uridylyltransferase activity. However, the ATP ratio is higher than UTP in cells, suggesting that it functions primarily as a poly(A) polymerase. Acts as a specific terminal uridylyltransferase for U6 snRNA in vitro: responsible for a controlled elongation reaction that results in the restoration of the four 3'-terminal UMP-residues found in newly transcribed U6 snRNA. Not involved in replication-dependent histone mRNA degradation. This Mus musculus (Mouse) protein is Speckle targeted PIP5K1A-regulated poly(A) polymerase (Tut1).